Here is a 228-residue protein sequence, read N- to C-terminus: MPKLILCRHGQSEWNAKNLFTGWEDVNLSEQGINEATRAGEKVRENNIAIDVAFTSLLTRALDTTHYILTESKQQWIPVYKSWRLNERHYGGLQGLNKDDARKEFGEEQVHIWRRSYDVKPPAETEEQREAYLADRRYNHLDKRMMPYSESLKDTLVRVIPFWTDHISQYLLDGQTVLVSAHGNSIRALIKYLEDVSDEDIINYEIKTGAPLVYELTDDLEVIDKYYL.

Residues 8 to 15 (RHGQSEWN), 21 to 22 (TG), arginine 60, 87 to 90 (ERHY), lysine 98, 114 to 115 (RR), and 183 to 184 (GN) contribute to the substrate site. The Tele-phosphohistidine intermediate role is filled by histidine 9. The Proton donor/acceptor role is filled by glutamate 87.

This sequence belongs to the phosphoglycerate mutase family. BPG-dependent PGAM subfamily.

The enzyme catalyses (2R)-2-phosphoglycerate = (2R)-3-phosphoglycerate. Its pathway is carbohydrate degradation; glycolysis; pyruvate from D-glyceraldehyde 3-phosphate: step 3/5. Its function is as follows. Catalyzes the interconversion of 2-phosphoglycerate and 3-phosphoglycerate. The sequence is that of 2,3-bisphosphoglycerate-dependent phosphoglycerate mutase from Staphylococcus aureus (strain Mu3 / ATCC 700698).